Here is a 309-residue protein sequence, read N- to C-terminus: Dihydroorotate dehydrogenase B (NAD(+)), catalytic subunit (309 aa).

Residues Ser-21 and 45–46 contribute to the FMN site; that span reads KA. Substrate contacts are provided by residues Lys-45 and 69 to 73; that span reads NAIGL. 2 residues coordinate FMN: Asn-99 and Asn-127. Substrate is bound at residue Asn-127. The Nucleophile role is filled by Cys-130. Positions 165 and 191 each coordinate FMN. 192-193 contributes to the substrate binding site; that stretch reads NT. Residues Gly-217, 243–244, and 265–266 each bind FMN; these read GG and GT.

This sequence belongs to the dihydroorotate dehydrogenase family. Type 1 subfamily. Heterotetramer of 2 PyrK and 2 PyrD type B subunits. FMN is required as a cofactor.

Its subcellular location is the cytoplasm. It catalyses the reaction (S)-dihydroorotate + NAD(+) = orotate + NADH + H(+). The protein operates within pyrimidine metabolism; UMP biosynthesis via de novo pathway; orotate from (S)-dihydroorotate (NAD(+) route): step 1/1. Functionally, catalyzes the conversion of dihydroorotate to orotate with NAD(+) as electron acceptor. The chain is Dihydroorotate dehydrogenase B (NAD(+)), catalytic subunit (pyrD) from Bacillus cytotoxicus (strain DSM 22905 / CIP 110041 / 391-98 / NVH 391-98).